The primary structure comprises 190 residues: Flavodoxin-like domain-containing protein BilS (190 aa).

Its pathway is porphyrin-containing compound metabolism; protoheme degradation. Its function is as follows. Together with BilR, catalyzes reduction of mesobilirubin and/or bilirubin to urobilinogen, a key step during heme degradation. BilS is probably involved in electron transfer for the bilirubin reductase BilR. This chain is Flavodoxin-like domain-containing protein BilS, found in Clostridium symbiosum (strain WAL-14163).